Consider the following 94-residue polypeptide: Putative pterin-4-alpha-carbinolamine dehydratase (94 aa).

It belongs to the pterin-4-alpha-carbinolamine dehydratase family.

The catalysed reaction is (4aS,6R)-4a-hydroxy-L-erythro-5,6,7,8-tetrahydrobiopterin = (6R)-L-erythro-6,7-dihydrobiopterin + H2O. This Mycobacteroides abscessus (strain ATCC 19977 / DSM 44196 / CCUG 20993 / CIP 104536 / JCM 13569 / NCTC 13031 / TMC 1543 / L948) (Mycobacterium abscessus) protein is Putative pterin-4-alpha-carbinolamine dehydratase.